Consider the following 138-residue polypeptide: Large ribosomal subunit protein uL16 (138 aa).

The protein belongs to the universal ribosomal protein uL16 family. As to quaternary structure, part of the 50S ribosomal subunit.

In terms of biological role, binds 23S rRNA and is also seen to make contacts with the A and possibly P site tRNAs. The chain is Large ribosomal subunit protein uL16 from Chlamydia caviae (strain ATCC VR-813 / DSM 19441 / 03DC25 / GPIC) (Chlamydophila caviae).